The sequence spans 348 residues: Galactose-1-phosphate uridylyltransferase (348 aa).

A UDP-alpha-D-glucose-binding site is contributed by 28 to 31 (RAKR). Zn(2+)-binding residues include Cys-52 and Cys-55. UDP-alpha-D-glucose is bound by residues Val-61 and 77-78 (ND). Residue His-115 participates in Zn(2+) binding. UDP-alpha-D-glucose-binding positions include Asn-153 and 159–161 (GCS). Residue His-164 coordinates Zn(2+). Catalysis depends on His-166, which acts as the Tele-UMP-histidine intermediate. UDP-alpha-D-glucose is bound at residue Gln-168. Residues Glu-182, His-281, His-296, and His-298 each contribute to the Fe cation site. UDP-alpha-D-glucose is bound by residues 311–312 (KF), 316–317 (YE), and Gln-323.

This sequence belongs to the galactose-1-phosphate uridylyltransferase type 1 family. Homodimer. It depends on Zn(2+) as a cofactor.

The catalysed reaction is alpha-D-galactose 1-phosphate + UDP-alpha-D-glucose = alpha-D-glucose 1-phosphate + UDP-alpha-D-galactose. It participates in carbohydrate metabolism; galactose metabolism. The protein is Galactose-1-phosphate uridylyltransferase (galT) of Escherichia coli (strain K12).